We begin with the raw amino-acid sequence, 258 residues long: Small ribosomal subunit protein mS40 (258 aa).

A mitochondrion-targeting transit peptide spans 1-35; the sequence is MAASVLNTLLRRLPMLSLFRGAHRVQVPLQTLCTK. Phosphoserine is present on residues serine 38 and serine 49. Residues 218–258 form a disordered region; it reads RLYQGHLREESGPPPESMPKMPPTAPAEASFTGQTDPQSAL. Over residues 229–242 the composition is skewed to pro residues; the sequence is GPPPESMPKMPPTA. Residues 248-258 are compositionally biased toward polar residues; the sequence is FTGQTDPQSAL.

It belongs to the bacterial ribosomal protein bS18 family. Mitochondrion-specific ribosomal protein mS40 subfamily. In terms of assembly, component of the mitochondrial ribosome small subunit (28S) which comprises a 12S rRNA and about 30 distinct proteins.

It localises to the mitochondrion. This Macaca mulatta (Rhesus macaque) protein is Small ribosomal subunit protein mS40 (MRPS18B).